The following is a 310-amino-acid chain: Ribosomal RNA small subunit methyltransferase H (310 aa).

S-adenosyl-L-methionine-binding positions include 32 to 34, aspartate 52, alanine 83, aspartate 100, and glutamine 107; that span reads GGH.

It belongs to the methyltransferase superfamily. RsmH family.

The protein resides in the cytoplasm. The catalysed reaction is cytidine(1402) in 16S rRNA + S-adenosyl-L-methionine = N(4)-methylcytidine(1402) in 16S rRNA + S-adenosyl-L-homocysteine + H(+). In terms of biological role, specifically methylates the N4 position of cytidine in position 1402 (C1402) of 16S rRNA. The chain is Ribosomal RNA small subunit methyltransferase H from Geobacillus sp. (strain WCH70).